Here is a 353-residue protein sequence, read N- to C-terminus: B1 bradykinin receptor (353 aa).

Residues 1–40 (MASSWPPLELQSSNQSQLFPQNATACDNAPEAWDLLHRVL) lie on the Extracellular side of the membrane. N-linked (GlcNAc...) asparagine glycans are attached at residues Asn14 and Asn22. Residues 41–64 (PTFIISICFFGLLGNLFVLLVFLL) form a helical membrane-spanning segment. Residues 65–73 (PRRQLNVAE) lie on the Cytoplasmic side of the membrane. The chain crosses the membrane as a helical span at residues 74–98 (IYLANLAASDLVFVLGLPFWAENIW). The Extracellular segment spans residues 99 to 111 (NQFNWPFGALLCR). Cys110 and Cys189 form a disulfide bridge. A helical membrane pass occupies residues 112 to 133 (VINGVIKANLFISIFLVVAISQ). Residues 134–155 (DRYRVLVHPMASRRQQRRRQAR) lie on the Cytoplasmic side of the membrane. The helical transmembrane segment at 156 to 178 (VTCVLIWVVGGLLSIPTFLLRSI) threads the bilayer. The Extracellular segment spans residues 179-199 (QAVPDLNITACILLLPHEAWH). Asn185 carries an N-linked (GlcNAc...) asparagine glycan. A helical membrane pass occupies residues 200–226 (FARIVELNILGFLLPLAAIVFFNYHIL). Residues 227–247 (ASLRTREEVSRTRCGGRKDSK) lie on the Cytoplasmic side of the membrane. A helical transmembrane segment spans residues 248 to 272 (TTALILTLVVAFLVCWAPYHFFAFL). The Extracellular segment spans residues 273-291 (EFLFQVQAVRGCFWEDFID). A helical transmembrane segment spans residues 292–314 (LGLQLANFFAFTNSSLNPVIYVF). The Cytoplasmic segment spans residues 315 to 353 (VGRLFRTKVWELYKQCTPKSLAPISSSHRKEIFQLFWRN). Cys330 carries S-palmitoyl cysteine lipidation.

Belongs to the G-protein coupled receptor 1 family. Bradykinin receptor subfamily. BDKRB1 sub-subfamily.

It localises to the cell membrane. Functionally, this is a receptor for bradykinin. Could be a factor in chronic pain and inflammation. The sequence is that of B1 bradykinin receptor (BDKRB1) from Homo sapiens (Human).